A 265-amino-acid chain; its full sequence is Upstream stimulatory factor (265 aa).

Over residues 1 to 18 (MDVQDHTLDQGPQDKDKD) the composition is skewed to basic and acidic residues. Disordered stretches follow at residues 1 to 21 (MDVQ…DLEE) and 119 to 149 (ASAA…AAGG). The segment covering 134–144 (GEQQPGITQPS) has biased composition (polar residues). The bHLH domain maps to 190 to 245 (RRRATHNEVERRRRDKINNWIVKLSKIIPDCNIDHSKQGQSKGGILTKTCDYIHDL).

In terms of assembly, efficient DNA binding requires dimerization with another bHLH protein. Binds DNA as a homodimer or a heterodimer. As to expression, enriched in ectodermal tissue.

Its subcellular location is the nucleus. Its function is as follows. May act as a transcription factor which recognizes the CACGTG motif on SPEC gene promoters. The polypeptide is Upstream stimulatory factor (Strongylocentrotus purpuratus (Purple sea urchin)).